The following is a 216-amino-acid chain: Probable RNA 2'-phosphotransferase 2 (216 aa).

The protein belongs to the KptA/TPT1 family.

In terms of biological role, removes the 2'-phosphate from RNA via an intermediate in which the phosphate is ADP-ribosylated by NAD followed by a presumed transesterification to release the RNA and generate ADP-ribose 1''-2''-cyclic phosphate (APPR&gt;P). May function as an ADP-ribosylase. This chain is Probable RNA 2'-phosphotransferase 2 (kptA2), found in Archaeoglobus fulgidus (strain ATCC 49558 / DSM 4304 / JCM 9628 / NBRC 100126 / VC-16).